Consider the following 183-residue polypeptide: ATP-dependent protease subunit HslV (183 aa).

T2 is a catalytic residue. Positions 157, 160, and 163 each coordinate Na(+).

It belongs to the peptidase T1B family. HslV subfamily. In terms of assembly, a double ring-shaped homohexamer of HslV is capped on each side by a ring-shaped HslU homohexamer. The assembly of the HslU/HslV complex is dependent on binding of ATP.

The protein resides in the cytoplasm. The catalysed reaction is ATP-dependent cleavage of peptide bonds with broad specificity.. Its activity is regulated as follows. Allosterically activated by HslU binding. In terms of biological role, protease subunit of a proteasome-like degradation complex believed to be a general protein degrading machinery. This chain is ATP-dependent protease subunit HslV, found in Marinomonas sp. (strain MWYL1).